Here is a 622-residue protein sequence, read N- to C-terminus: Threonine--tRNA ligase (622 aa).

The tract at residues 1–141 (MKTLLIHSDY…SRKITTERKE (141 aa)) is editing domain. A catalytic region spans residues 199-498 (PHVKYIKEKE…TLENRPPALP (300 aa)). C291, H343, and H467 together coordinate Zn(2+).

Belongs to the class-II aminoacyl-tRNA synthetase family. In terms of assembly, homodimer. The cofactor is Zn(2+).

The protein localises to the cytoplasm. It carries out the reaction tRNA(Thr) + L-threonine + ATP = L-threonyl-tRNA(Thr) + AMP + diphosphate + H(+). Functionally, catalyzes the attachment of threonine to tRNA(Thr) in a two-step reaction: L-threonine is first activated by ATP to form Thr-AMP and then transferred to the acceptor end of tRNA(Thr). Also edits incorrectly charged L-seryl-tRNA(Thr). The polypeptide is Threonine--tRNA ligase (Methanococcus maripaludis (strain C6 / ATCC BAA-1332)).